The primary structure comprises 451 residues: Chromosomal replication initiator protein DnaA (451 aa).

Residues 1 to 71 (MSEKEIWDKV…QAIIYDVIGY (71 aa)) are domain I, interacts with DnaA modulators. The interval 71 to 112 (YEVKPHFISEDELASYNNVNTQEVQEPQVQHSSIDDKTWGKE) is domain II. Residues 113–329 (QFNMHNTFDT…GALTRLLAYS (217 aa)) form a domain III, AAA+ region region. G157, G159, K160, and T161 together coordinate ATP. The segment at 330-451 (KLQGKPITTE…ENLEKEIRNQ (122 aa)) is domain IV, binds dsDNA.

This sequence belongs to the DnaA family. As to quaternary structure, oligomerizes as a right-handed, spiral filament on DNA at oriC.

It localises to the cytoplasm. Plays an essential role in the initiation and regulation of chromosomal replication. ATP-DnaA binds to the origin of replication (oriC) to initiate formation of the DNA replication initiation complex once per cell cycle. Binds the DnaA box (a 9 base pair repeat at the origin) and separates the double-stranded (ds)DNA. Forms a right-handed helical filament on oriC DNA; dsDNA binds to the exterior of the filament while single-stranded (ss)DNA is stabiized in the filament's interior. The ATP-DnaA-oriC complex binds and stabilizes one strand of the AT-rich DNA unwinding element (DUE), permitting loading of DNA polymerase. After initiation quickly degrades to an ADP-DnaA complex that is not apt for DNA replication. Binds acidic phospholipids. This is Chromosomal replication initiator protein DnaA from Staphylococcus epidermidis (strain ATCC 12228 / FDA PCI 1200).